Reading from the N-terminus, the 80-residue chain is Metallothionein-like protein type 2 MET1 (80 aa).

It belongs to the metallothionein superfamily. Type 15 family.

Functionally, metallothioneins have a high content of cysteine residues that bind various heavy metals. In Fragaria ananassa (Strawberry), this protein is Metallothionein-like protein type 2 MET1 (MET1).